A 491-amino-acid polypeptide reads, in one-letter code: Malonate-semialdehyde dehydrogenase 1 (491 aa).

The NAD(+) site is built by A154, F156, K180, E183, R184, S233, and T255. Catalysis depends on C288, which acts as the Nucleophile. E386 is an NAD(+) binding site.

Belongs to the aldehyde dehydrogenase family. IolA subfamily. In terms of assembly, homotetramer.

The catalysed reaction is 3-oxopropanoate + NAD(+) + CoA + H2O = hydrogencarbonate + acetyl-CoA + NADH + H(+). It carries out the reaction 2-methyl-3-oxopropanoate + NAD(+) + CoA + H2O = propanoyl-CoA + hydrogencarbonate + NADH + H(+). It functions in the pathway polyol metabolism; myo-inositol degradation into acetyl-CoA; acetyl-CoA from myo-inositol: step 7/7. In terms of biological role, catalyzes the oxidation of malonate semialdehyde (MSA) and methylmalonate semialdehyde (MMSA) into acetyl-CoA and propanoyl-CoA, respectively. Is involved in a myo-inositol catabolic pathway. Bicarbonate, and not CO2, is the end-product of the enzymatic reaction. The protein is Malonate-semialdehyde dehydrogenase 1 of Shouchella clausii (strain KSM-K16) (Alkalihalobacillus clausii).